We begin with the raw amino-acid sequence, 269 residues long: 5'-nucleotidase SurE (269 aa).

Positions 11, 12, 43, and 101 each coordinate a divalent metal cation.

It belongs to the SurE nucleotidase family. A divalent metal cation is required as a cofactor.

The protein localises to the cytoplasm. The enzyme catalyses a ribonucleoside 5'-phosphate + H2O = a ribonucleoside + phosphate. Its function is as follows. Nucleotidase that shows phosphatase activity on nucleoside 5'-monophosphates. The sequence is that of 5'-nucleotidase SurE from Prochlorococcus marinus (strain MIT 9313).